We begin with the raw amino-acid sequence, 214 residues long: CASP-like protein UU5 (214 aa).

Residues 1-20 (MSTVAQDSAPGGGKIQDAME) form a disordered region. At 1-57 (MSTVAQDSAPGGGKIQDAMEQGAPGASSAAVVPEGGHYTQTPSPAFQAVKKNINHMS) the chain is on the cytoplasmic side. The helical transmembrane segment at 58–78 (AFSLGLRVAEFVLSVIAFSLM) threads the bilayer. Topologically, residues 79 to 99 (ASADQNGAVYSTFTSYSFVLA) are extracellular. The helical transmembrane segment at 100–120 (VNVLVVFYTIGQIIMSVLLLV) threads the bilayer. The Cytoplasmic segment spans residues 121-138 (SGSTPKKIYLFITFGCDQ). A helical transmembrane segment spans residues 139–159 (LSAFLLMAAGAAGASVALIIN). At 160 to 193 (RGGVTDAYGNGCIDGKITSFCSHAQASVAFTFLS) the chain is on the extracellular side. A helical transmembrane segment spans residues 194 to 214 (FFCMVISSLLGVYSLAPYLIL).

The protein belongs to the Casparian strip membrane proteins (CASP) family. As to quaternary structure, homodimer and heterodimers.

The protein localises to the cell membrane. This chain is CASP-like protein UU5, found in Physcomitrium patens (Spreading-leaved earth moss).